A 95-amino-acid chain; its full sequence is uncharacterized protein (95 aa).

The interval 65–95 (DANDYDTTTTEEEDSSTTTTTDNETNSDDDI) is disordered.

This is an uncharacterized protein from Lymantria dispar multicapsid nuclear polyhedrosis virus (LdMNPV).